Here is a 308-residue protein sequence, read N- to C-terminus: Aspartate carbamoyltransferase catalytic subunit (308 aa).

The carbamoyl phosphate site is built by arginine 55 and threonine 56. Lysine 84 provides a ligand contact to L-aspartate. Carbamoyl phosphate is bound by residues arginine 105, histidine 133, and glutamine 136. L-aspartate contacts are provided by arginine 167 and arginine 228. Residues leucine 267 and proline 268 each coordinate carbamoyl phosphate.

The protein belongs to the aspartate/ornithine carbamoyltransferase superfamily. ATCase family. Heterooligomer of catalytic and regulatory chains.

It carries out the reaction carbamoyl phosphate + L-aspartate = N-carbamoyl-L-aspartate + phosphate + H(+). It functions in the pathway pyrimidine metabolism; UMP biosynthesis via de novo pathway; (S)-dihydroorotate from bicarbonate: step 2/3. Catalyzes the condensation of carbamoyl phosphate and aspartate to form carbamoyl aspartate and inorganic phosphate, the committed step in the de novo pyrimidine nucleotide biosynthesis pathway. The sequence is that of Aspartate carbamoyltransferase catalytic subunit from Methanocella arvoryzae (strain DSM 22066 / NBRC 105507 / MRE50).